Here is a 414-residue protein sequence, read N- to C-terminus: 2,3-diketo-5-methylthiopentyl-1-phosphate enolase (414 aa).

Lysine 99 functions as the Proton acceptor in the catalytic mechanism. Substrate-binding positions include lysine 148, lysine 174–glutamate 177, histidine 265, glycine 338, and glycine 360–glycine 361. The Mg(2+) site is built by lysine 174, aspartate 176, and glutamate 177. Position 174 is an N6-carboxylysine (lysine 174).

It belongs to the RuBisCO large chain family. Type IV subfamily. Homodimer. It depends on Mg(2+) as a cofactor.

The enzyme catalyses 5-methylsulfanyl-2,3-dioxopentyl phosphate = 2-hydroxy-5-methylsulfanyl-3-oxopent-1-enyl phosphate. It functions in the pathway amino-acid biosynthesis; L-methionine biosynthesis via salvage pathway; L-methionine from S-methyl-5-thio-alpha-D-ribose 1-phosphate: step 3/6. In terms of biological role, catalyzes the enolization of 2,3-diketo-5-methylthiopentyl-1-phosphate (DK-MTP-1-P) into 2-hydroxy-3-keto-5-methylthiopentenyl-1-phosphate (HK-MTPenyl-1-P). This chain is 2,3-diketo-5-methylthiopentyl-1-phosphate enolase, found in Bacillus cereus (strain G9842).